The primary structure comprises 500 residues: Zinc finger protein PLAG1 (500 aa).

The interval 1–30 (MATVIPGDLSEVRDTQKVPSGKRKRGETKP) is disordered. Residues 2 to 84 (ATVIPGDLSE…SKYKLQRHMA (83 aa)) are interaction with KPNA2. The short motif at 22–25 (KRKR) is the Nuclear localization signal element. 7 C2H2-type zinc fingers span residues 34-56 (FPCQLCDKAFNSVEKLKVHSYSH), 62-86 (YKCIQQDCTKAFVSKYKLQRHMATH), 92-114 (HKCNYCEKMFHRKDHLKNHLHTH), 121-143 (FKCEECGKNYNTKLGFKRHLALH), 150-172 (LTCKVCLQTFESTGVLLEHLKSH), 185-207 (HQCEHCDRRFYTRKDVRRHMVVH), and 213-236 (FLCQYCAQRFGRKDHLTRHMKKSH). The segment at 41–242 (KAFNSVEKLK…KKSHNQELLK (202 aa)) is decreased nuclear import with localization in the nucleus but also in the cytoplasm. The interval 243-384 (VKTEPVDFLD…QASSSSKLGL (142 aa)) is repression domain; contains 3 sumoylation motifs and massively decrease transcription activity. The tract at residues 243-500 (VKTEPVDFLD…TLPRFHQAFQ (258 aa)) is activates transcription; Inhibition of nuclear import due to lack of NLS and KPNA2 interaction. Residues lysine 244 and lysine 263 each participate in a glycyl lysine isopeptide (Lys-Gly) (interchain with G-Cter in SUMO) cross-link. The segment at 365 to 388 (GGVPSSSQDSQASSSSKLGLDPQI) is disordered. Low complexity predominate over residues 369-380 (SSSQDSQASSSS). The massively activates transcription stretch occupies residues 385-500 (DPQIGSLDDG…TLPRFHQAFQ (116 aa)).

The protein belongs to the krueppel C2H2-type zinc-finger protein family. Interacts with KPNA2, which escorts protein to the nucleus via interaction with nuclear localization signal. Interacts with E3 SUMO-protein ligase PIAS1, PIAS2 and PIAS4. Post-translationally, sumoylated with SUMO1; which inhibits transcriptional activity, but does not affect nuclear localization. Blockers of sumoylation pathway such as SENP3 and inactive UBE2I increases transcriptional capacity. Sumoylation is increased in the presence of PIAS1. In terms of processing, acetylated by lysine acetyltransferase EP300; which activates transcriptional capacity. Lysine residues that are sumoylated also seem to be target for acetylation. In terms of tissue distribution, expressed in fetal tissues such as lung, liver and kidney. Not detected or weak detection in normal adult tissues, but highly expressed in salivary gland with benign or malignant pleiomorphic adenomas with or without 8q12 aberrations, with preferential occurrence in benign tumors.

It is found in the nucleus. In terms of biological role, transcription factor whose activation results in up-regulation of target genes, such as IGFII, leading to uncontrolled cell proliferation: when overexpressed in cultured cells, higher proliferation rate and transformation are observed. Other target genes such as CRLF1, CRABP2, CRIP2, PIGF are strongly induced in cells with PLAG1 induction. Proto-oncogene whose ectopic expression can trigger the development of pleomorphic adenomas of the salivary gland and lipoblastomas. Overexpression is associated with up-regulation of IGFII, is frequently observed in hepatoblastoma, common primary liver tumor in childhood. Cooperates with CBFB-MYH11, a fusion gene important for myeloid leukemia. This chain is Zinc finger protein PLAG1 (PLAG1), found in Homo sapiens (Human).